A 174-amino-acid polypeptide reads, in one-letter code: Ferritin, heavy subunit (174 aa).

Residues 7–156 (QNFHKDCEAA…DWVTNLRRLG (150 aa)) enclose the Ferritin-like diiron domain. Fe cation-binding residues include Glu24, Glu59, His62, Glu104, and Gln138.

The protein belongs to the ferritin family. In terms of assembly, in liver, forms a heteromer consisting of middle and heavy subunits. The functional molecule forms a roughly spherical shell with a diameter of 12 nm and contains a central cavity into which the insoluble mineral iron core is deposited. Liver (at protein level).

The catalysed reaction is 4 Fe(2+) + O2 + 4 H(+) = 4 Fe(3+) + 2 H2O. Stores iron in a soluble, non-toxic, readily available form. Important for iron homeostasis. Has ferroxidase activity. Iron is taken up in the ferrous form and deposited as ferric hydroxides after oxidation. Also plays a role in delivery of iron to cells. Mediates iron uptake in capsule cells of the developing kidney. Delivery to lysosomes is mediated by the cargo receptor NCOA4 for autophagic degradation and release of iron. This Trematomus bernacchii (Emerald rockcod) protein is Ferritin, heavy subunit.